The following is a 611-amino-acid chain: Probable methyltransferase PMT1 (611 aa).

The Cytoplasmic segment spans residues Met1–Lys11. A helical; Signal-anchor for type II membrane protein membrane pass occupies residues Pro12–Gly32. The Lumenal portion of the chain corresponds to Ser33 to Glu611. Asn345 is a glycosylation site (N-linked (GlcNAc...) asparagine).

This sequence belongs to the methyltransferase superfamily.

It localises to the golgi apparatus membrane. The chain is Probable methyltransferase PMT1 from Arabidopsis thaliana (Mouse-ear cress).